The primary structure comprises 508 residues: MTQTLKYASRVFHRVRWAPELGASLGYREYHSARRSLADIPGPSTPSFLAELFCKGGLSRLHELQVQGAAHFGPVWLASFGTVRTVYVAAPALVEELLRQEGPRPERCSFSPWTEHRRCRQRACGLLTAEGEEWQRLRSLLAPLLLRPQAAARYAGTLNNVVCDLVRRLRRQRGRGTGPPALVRDVAGEFYKFGLEGIAAVLLGSRLGCLEAQVPPDTETFIRAVGSVFVSTLLTMAMPHWLRHLVPGPWGRLCRDWDQMFAFAQRHVERREAEAAMRNGGQPEKDLESGAHLTHFLFREELPAQSILGNVTELLLAGVDTVSNTLSWALYELSRHPEVQTALHSEITAALSPGSSAYPSATVLSQLPLLKAVVKEVLRLYPVVPGNSRVPDKDIHVGDYIIPKNTLVTLCHYATSRDPAQFPEPNSFRPARWLGEGPTPHPFASLPFGFGKRSCMGRRLAELELQMALAQILTHFEVQPEPGAAPVRPKTRTVLVPERSINLQFLDR.

Cys455 is a heme binding site.

Belongs to the cytochrome P450 family. The cofactor is heme. In terms of tissue distribution, kidney.

It localises to the mitochondrion membrane. The catalysed reaction is calcidiol + 2 reduced [adrenodoxin] + O2 + 2 H(+) = calcitriol + 2 oxidized [adrenodoxin] + H2O. The enzyme catalyses secalciferol + 2 reduced [adrenodoxin] + O2 + 2 H(+) = calcitetrol + 2 oxidized [adrenodoxin] + H2O. It carries out the reaction 25-hydroxy-24-oxocalciol + 2 reduced [adrenodoxin] + O2 + 2 H(+) = (1S)-1,25-dihydroxy-24-oxocalciol + 2 oxidized [adrenodoxin] + H2O. It catalyses the reaction 25-hydroxyvitamin D2 + 2 reduced [adrenodoxin] + O2 + 2 H(+) = 1alpha,25-dihydroxyvitamin D2 + 2 oxidized [adrenodoxin] + H2O. It functions in the pathway hormone biosynthesis; vitamin D biosynthesis. Its activity is regulated as follows. Activated by cardiolipin and dioleoyl phosphatidylethanolamine (DOPE), phospholipids found in the inner mitochondrial membrane. Inhibited by high substrate concentration. In terms of biological role, a cytochrome P450 monooxygenase involved in vitamin D metabolism and in calcium and phosphorus homeostasis. Catalyzes the rate-limiting step in the activation of vitamin D in the kidney, namely the hydroxylation of 25-hydroxyvitamin D3/calcidiol at the C1alpha-position to form the hormonally active form of vitamin D3, 1alpha,25-dihydroxyvitamin D3/calcitriol that acts via the vitamin D receptor (VDR). Has 1alpha-hydroxylase activity on vitamin D intermediates of the CYP24A1-mediated inactivation pathway. Converts 24R,25-dihydroxyvitamin D3/secalciferol to 1-alpha,24,25-trihydroxyvitamin D3, an active ligand of VDR. Also active on 25-hydroxyvitamin D2. Mechanistically, uses molecular oxygen inserting one oxygen atom into a substrate, and reducing the second into a water molecule, with two electrons provided by NADPH via FDXR/adrenodoxin reductase and FDX1/adrenodoxin. This Homo sapiens (Human) protein is 25-hydroxyvitamin D-1 alpha hydroxylase, mitochondrial (CYP27B1).